The sequence spans 78 residues: Large ribosomal subunit protein bL28 (78 aa).

Residues 1-24 (MSRVCQVTGKRPAVGNNRSHANNA) form a disordered region.

The protein belongs to the bacterial ribosomal protein bL28 family.

This is Large ribosomal subunit protein bL28 from Aeromonas salmonicida (strain A449).